A 400-amino-acid polypeptide reads, in one-letter code: Nicotinate phosphoribosyltransferase (400 aa).

His220 is modified (phosphohistidine; by autocatalysis).

The protein belongs to the NAPRTase family. In terms of processing, transiently phosphorylated on a His residue during the reaction cycle. Phosphorylation strongly increases the affinity for substrates and increases the rate of nicotinate D-ribonucleotide production. Dephosphorylation regenerates the low-affinity form of the enzyme, leading to product release.

It catalyses the reaction nicotinate + 5-phospho-alpha-D-ribose 1-diphosphate + ATP + H2O = nicotinate beta-D-ribonucleotide + ADP + phosphate + diphosphate. The protein operates within cofactor biosynthesis; NAD(+) biosynthesis; nicotinate D-ribonucleotide from nicotinate: step 1/1. Catalyzes the synthesis of beta-nicotinate D-ribonucleotide from nicotinate and 5-phospho-D-ribose 1-phosphate at the expense of ATP. This chain is Nicotinate phosphoribosyltransferase, found in Shigella sonnei (strain Ss046).